We begin with the raw amino-acid sequence, 174 residues long: UPF0340 protein SAB1998c (174 aa).

It belongs to the UPF0340 family.

In Staphylococcus aureus (strain bovine RF122 / ET3-1), this protein is UPF0340 protein SAB1998c.